The following is a 126-amino-acid chain: Large ribosomal subunit protein bL17 (126 aa).

This sequence belongs to the bacterial ribosomal protein bL17 family. Part of the 50S ribosomal subunit. Contacts protein L32.

The chain is Large ribosomal subunit protein bL17 from Laribacter hongkongensis (strain HLHK9).